The following is a 235-amino-acid chain: Ribonuclease 3 (235 aa).

Positions proline 8 to glycine 137 constitute an RNase III domain. Glutamate 50 is a Mg(2+) binding site. Aspartate 54 is a catalytic residue. The Mg(2+) site is built by aspartate 123 and glutamate 126. Residue glutamate 126 is part of the active site. The 70-residue stretch at aspartate 163–glycine 232 folds into the DRBM domain. The disordered stretch occupies residues glutamine 211–glycine 235. Residues alanine 226–glycine 235 show a composition bias toward basic and acidic residues.

This sequence belongs to the ribonuclease III family. Homodimer. The cofactor is Mg(2+).

Its subcellular location is the cytoplasm. It catalyses the reaction Endonucleolytic cleavage to 5'-phosphomonoester.. Its function is as follows. Digests double-stranded RNA. Involved in the processing of primary rRNA transcript to yield the immediate precursors to the large and small rRNAs (23S and 16S). Processes some mRNAs, and tRNAs when they are encoded in the rRNA operon. Processes pre-crRNA and tracrRNA of type II CRISPR loci if present in the organism. The chain is Ribonuclease 3 from Heliobacterium modesticaldum (strain ATCC 51547 / Ice1).